Here is a 683-residue protein sequence, read N- to C-terminus: WD repeat-containing protein 48 homolog (683 aa).

WD repeat units follow at residues 27–82 (SNRS…PVQY), 88–130 (QHTD…FIDC), 133–167 (THKD…INAN), 176–215 (GCKD…KIMK), 218–257 (GHTD…CIAT), 260–299 (AHEE…KSQL), and 302–343 (KEEA…QLSI). Positions 341–364 (LSIGGDEDGPSTSNANHSVSASSS) are disordered. Low complexity predominate over residues 351–364 (STSNANHSVSASSS). A WD 8 repeat occupies 389 to 428 (PGAPAIKKHAMLSDKRHVLTRDSDGNVALYDVLAARKIKD).

The protein belongs to the WD repeat WDR48 family. Interacts with usp-46; the interaction increases the catalytic activity of usp-46 in the presence of wdr-20. In terms of tissue distribution, expressed in several head neurons and cells in the tail including the anal depressor cell.

Functionally, together with wdr-20, binds to and stimulates the activity of the deubiquitinating enzyme usp-46, leading to deubiquitination and stabilization of the glr-1 glutamate receptor. The polypeptide is WD repeat-containing protein 48 homolog (wdr-48) (Caenorhabditis elegans).